We begin with the raw amino-acid sequence, 341 residues long: Glyceraldehyde-3-phosphate dehydrogenase 3 (341 aa).

NAD(+) is bound by residues 13 to 14 (RI), Asp35, and Arg85. D-glyceraldehyde 3-phosphate contacts are provided by residues 157–159 (SCT), Thr188, 217–218 (TG), and Arg240. The active-site Nucleophile is the Cys158. Asn322 provides a ligand contact to NAD(+).

It belongs to the glyceraldehyde-3-phosphate dehydrogenase family. In terms of assembly, homotetramer.

It is found in the cytoplasm. It carries out the reaction D-glyceraldehyde 3-phosphate + phosphate + NAD(+) = (2R)-3-phospho-glyceroyl phosphate + NADH + H(+). It functions in the pathway carbohydrate degradation; glycolysis; pyruvate from D-glyceraldehyde 3-phosphate: step 1/5. The polypeptide is Glyceraldehyde-3-phosphate dehydrogenase 3 (gpd-3) (Caenorhabditis elegans).